Here is a 508-residue protein sequence, read N- to C-terminus: Maturase K (508 aa).

Belongs to the intron maturase 2 family. MatK subfamily.

Its subcellular location is the plastid. It is found in the chloroplast. Functionally, usually encoded in the trnK tRNA gene intron. Probably assists in splicing its own and other chloroplast group II introns. In Verbena rigida (Tuberous vervain), this protein is Maturase K.